Here is a 598-residue protein sequence, read N- to C-terminus: uncharacterized protein (598 aa).

The segment covering M1 to R23 has biased composition (basic and acidic residues). Disordered stretches follow at residues M1 to V32, F151 to R190, and P222 to S241. Over residues E225–R235 the composition is skewed to basic and acidic residues. 2 positions are modified to phosphoserine: S238 and S242. 2 disordered regions span residues R366–R396 and A551–P571. Composition is skewed to polar residues over residues Q369–A386 and A558–S569.

This is an uncharacterized protein from Mus musculus (Mouse).